The sequence spans 317 residues: Methyltransferase CPUR_05424 (317 aa).

Positions 57 to 149 are methyltransferase domain; that stretch reads DVGAGNGPYA…QLRPGGTFAC (93 aa).

It belongs to the methyltransferase superfamily.

Its pathway is pigment biosynthesis. Its function is as follows. Methyltransferase; part of the ergochrome gene cluster responsible for the typical purple-black color of the ergot sclerotia. The ergochrome gene cluster produces several ergot pigments including the yellow ergochrome secalonic acid and its derivatives, as well as the red anthraquinones endocrocin and clavorubin. The pathway begins with the synthesis of atrochrysone thioester by the polyketide synthase (PKS) CPUR_05437. The atrochrysone carboxyl ACP thioesterase CPUR_05436 then breaks the thioester bond and releases the atrochrysone carboxylic acid from CPUR_05437. The atrochrysone carboxylic acid is then converted to atrochrysone which is further transformed into emodin anthrone. The next step is performed by the anthrone oxygenase CPUR_05434 that catalyzes the oxidation of emodinanthrone to emodin. Emodin is further modified to yield monodictyphenone via several steps involving CPUR_05427, CPUR_05428, CPUR_05429 and CPUR_05430. The short chain dehydrogenase/reductase CPUR_05418 then catalyzes the C-5 ketoreduction to give the xanthone skeleton of the monomeric units. Ergochromes formation requires further dimerization steps of different xanthone units, probably catalyzed by the cytochrome P450 monooxygenase CPUR_05419. CPUR_05425, CPUR_05426 and CPUR_05431 are unique to Claviceps, thus it is likely that they are involved in further modification of xanthone units or in their dimerization. The yellow ergochromes and the red anthraquinone pigments endocrocin and clavorubin are products from the same PKS derived precursors and the latter are likely shunt products in the pathway of xanthone biosynthesis. It is proposed that atrochrysone carboxylic acid released from the PKS CPUR_05437 can also be converted to endocrocin anthrone which is further oxidized into endocrocin by CPUR_05435. Endocrocin could be then modified to clavorubin, possibly by CPUR_05423 and CPUR_05431. Clavorubin is the principal anthraquinone metabolite produced by the cluster with a much higher yield compared to endocrocin. The chain is Methyltransferase CPUR_05424 from Claviceps purpurea (strain 20.1) (Ergot fungus).